The chain runs to 582 residues: Multicopper oxidase LPR1 homolog 1 (582 aa).

Positions 1 to 20 (MRAKVELAVLLLVLVGVAAG) are cleaved as a signal peptide. Cu cation contacts are provided by H150, H152, H198, and H200. N-linked (GlcNAc...) asparagine glycans are attached at residues N256, N300, and N308. The Plastocyanin-like domain maps to 285–354 (PFLAVARRRY…DVVVDFSQST (70 aa)). Positions 467, 470, and 472 each coordinate Cu cation. N504 is a glycosylation site (N-linked (GlcNAc...) asparagine). Residues H563, C564, H565, H569, and M574 each contribute to the Cu cation site.

The protein belongs to the multicopper oxidase family. Requires Cu cation as cofactor. As to expression, highly expressed in roots, and at lower levels in basal stems and leaf blades.

The protein localises to the endoplasmic reticulum membrane. In terms of biological role, multicopper oxidase that may play a role in the maintenance of inorganic phosphate homeostasis. The protein is Multicopper oxidase LPR1 homolog 1 of Oryza sativa subsp. japonica (Rice).